Consider the following 317-residue polypeptide: MRSYLDFEKPVAELEAKLEELRALGARDGAVAISDDVSRLESKAAAALAELYATLTPWQKTQVARHPQRPHFVDYCAGLIEEFTPLAGDRSFGEDEAVVGGFGRFRGRPVCVIGQEKGATTEARIRHNFGMARPEGYRKAVRLMELAGRFGLPVLTFVDTAGAYPGIEAEERGQAEAIARSTEACLALGTPNVALVIGEGGSGGAIALATANRVLMLEHAIYSVISPEGAASILWRDAGRAQDAATAMKITAQDLLRLGVIDGIVPEPTGGAHREPEAAIRAAGDALAEALTGLADLDADALREQRAQKFLEIGRRL.

Positions 39-293 (RLESKAAAAL…GDALAEALTG (255 aa)) constitute a CoA carboxyltransferase C-terminal domain.

It belongs to the AccA family. Acetyl-CoA carboxylase is a heterohexamer composed of biotin carboxyl carrier protein (AccB), biotin carboxylase (AccC) and two subunits each of ACCase subunit alpha (AccA) and ACCase subunit beta (AccD).

The protein localises to the cytoplasm. The enzyme catalyses N(6)-carboxybiotinyl-L-lysyl-[protein] + acetyl-CoA = N(6)-biotinyl-L-lysyl-[protein] + malonyl-CoA. It functions in the pathway lipid metabolism; malonyl-CoA biosynthesis; malonyl-CoA from acetyl-CoA: step 1/1. Component of the acetyl coenzyme A carboxylase (ACC) complex. First, biotin carboxylase catalyzes the carboxylation of biotin on its carrier protein (BCCP) and then the CO(2) group is transferred by the carboxyltransferase to acetyl-CoA to form malonyl-CoA. In Methylobacterium nodulans (strain LMG 21967 / CNCM I-2342 / ORS 2060), this protein is Acetyl-coenzyme A carboxylase carboxyl transferase subunit alpha.